The following is a 383-amino-acid chain: E3 ubiquitin-protein ligase Os04g0590900 (383 aa).

A helical transmembrane segment spans residues 53 to 73 (PVFSPLVIAIIGVLASAFLLV). The segment at 105-129 (GGAGSGGRHGHGQSRSHESWNVSPP) is disordered. An RING-type; atypical zinc finger spans residues 157–199 (CSVCLGEFSDGESLRLLPRCSHAFHQQCIDTWLKSHSNCPLCR). 2 disordered regions span residues 269-291 (EANGAAEIREEGSPPKRGASSFD) and 320-383 (LLAG…DHPM).

Its subcellular location is the membrane. The enzyme catalyses S-ubiquitinyl-[E2 ubiquitin-conjugating enzyme]-L-cysteine + [acceptor protein]-L-lysine = [E2 ubiquitin-conjugating enzyme]-L-cysteine + N(6)-ubiquitinyl-[acceptor protein]-L-lysine.. The protein operates within protein modification; protein ubiquitination. Possesses E3 ubiquitin-protein ligase in vitro. This is E3 ubiquitin-protein ligase Os04g0590900 from Oryza sativa subsp. japonica (Rice).